The sequence spans 328 residues: V-set and immunoglobulin domain-containing protein 2 (328 aa).

The N-terminal stretch at 1–24 (MAWPLVGAFLCGHLLGFVCLSGLA) is a signal peptide. The Ig-like V-type domain maps to 25 to 138 (VEVTVPTEPL…DFYTNGLGLI (114 aa)). The Extracellular segment spans residues 25–244 (VEVTVPTEPL…VTDSSEGRVA (220 aa)). C46 and C122 are oxidised to a cystine. Residues N139, N207, and N232 are each glycosylated (N-linked (GlcNAc...) asparagine). The region spanning 145 to 234 (PPSHPLCSQS…GSASCELNLS (90 aa)) is the Ig-like C2-type domain. A disulfide bridge links C167 with C218. The chain crosses the membrane as a helical span at residues 245–265 (GTLIGVLLGVLLLSVAAFCLI). Residues 266–328 (RFQKERKKEP…TTKSKLSMVV (63 aa)) lie on the Cytoplasmic side of the membrane.

As to expression, expressed in the stomach, colon and prostate.

It is found in the membrane. The polypeptide is V-set and immunoglobulin domain-containing protein 2 (Vsig2) (Mus musculus (Mouse)).